The chain runs to 528 residues: Vacuolar fusion protein MON1 homolog (528 aa).

Residues 1 to 16 (MEVEQTSVRSDTNSTC) are compositionally biased toward polar residues. A disordered region spans residues 1–50 (MEVEQTSVRSDTNSTCEYLDAEGDPESPNLYQEADPDQEAEQQNHSIISE).

The protein belongs to the MON1/SAND family. Component of the Mon1-Ccz1 guanyl-nucleotide exchange factor complex made up of Mon1, Ccz1 and Bulli; the interaction of Bulli with the Mon1-Ccz1 heterodimer is mediated via the C-terminal Mic1 domain of Bulli. Mon1 and Ccz1 form a stable complex which displays Rab7 GEF activity with or without Bulli; GEF activity is enhanced by Bulli possibly by improving membrane association of the complex. Interacts with Rab5 and Rab7; preferentially binds GTP-bound Rab5 and GDP-bound Rab7.

It localises to the cytoplasm. The protein resides in the cytosol. The Rab7 guanyl-nucleotide exchange factor (GEF) activity of the Mon1-Ccz1 complex is autoinhibited by the N-terminal disordered region of Mon1. GEF activity is stimulated by Rab5-mediated recruitment to membranes. Part of the Mon1-Ccz1 guanyl-nucleotide exchange factor complex specific for Rab7 that promotes the exchange of GDP to GTP, converting Rab7 from an inactive GDP-bound form into an active GTP-bound form. Plays an important role in membrane trafficking through the secretory apparatus. Required for recruitment of Rab7 to endosomal and autophagosomal membranes to mediate endolysosomal and autolysosomal vesicle maturation. Required for fusion of multivesicular bodies and lysosomes but not their formation or trafficking. Involved in the replacement of Rab5 (and possibly Rab4) with Rab7, also known as Rab conversion or the Rab cascade, during endosomal maturation. The Mon1-Ccz1 complex is recruited to phosphatidylinositol 3-phosphate (PtdIns[3]P) enriched membranes by Rab5, which stimulates recruitment and guanyl-nucleotide exchange of Rab7. Together with Rab7 required for autolysosome formation in fat cells and autophagic degradation during starvation-induced basal and developmental autophagy. Involved in neuromuscular junction (NMJ) presynaptic bouton function and morphogenesis. Together with Rab7, regulates levels of postsynaptic glutamate receptor GluRIIA in the NMJ presynapse. The protein is Vacuolar fusion protein MON1 homolog of Drosophila melanogaster (Fruit fly).